The following is a 292-amino-acid chain: Elongation factor Ts (292 aa).

The involved in Mg(2+) ion dislocation from EF-Tu stretch occupies residues 80 to 83 (TDFV).

This sequence belongs to the EF-Ts family.

It localises to the cytoplasm. Its function is as follows. Associates with the EF-Tu.GDP complex and induces the exchange of GDP to GTP. It remains bound to the aminoacyl-tRNA.EF-Tu.GTP complex up to the GTP hydrolysis stage on the ribosome. This chain is Elongation factor Ts, found in Oenococcus oeni (strain ATCC BAA-331 / PSU-1).